The primary structure comprises 37 residues: Large ribosomal subunit protein bL36A (37 aa).

This sequence belongs to the bacterial ribosomal protein bL36 family.

The polypeptide is Large ribosomal subunit protein bL36A (Leifsonia xyli subsp. xyli (strain CTCB07)).